The sequence spans 289 residues: MIFEIIKIGSQPINFAYPIPLLSLLAFMLSGSGYNELIISYIFAFSFFTAANLWNHLNDAEDDLNAGRNYARFLIEHRKIVTEFVVAFYFVSFLLIFFISKSKEIALLLTGLSVVLTWLYSDKIFIGKIIRRFKEDYKTEVFTYILCSFSFPLSFWTIFSEISQVGVVFTLATGFTYLSGFFLKDLKDISADIKSGYRTLAVVLSPSTLLIISVMLFIASTFVVIFSSLLDVTPTSSLLVLTVYPPILFAIYKFHKEKWKITKNIISSLKIYTYSYLGFLIAFAIGCKL.

9 helical membrane-spanning segments follow: residues 13–32, 37–59, 80–99, 104–121, 141–160, 165–183, 203–225, 235–252, and 265–287; these read INFAYPIPLLSLLAFMLSGS, LIISYIFAFSFFTAANLWNHLND, IVTEFVVAFYFVSFLLIFFI, EIALLLTGLSVVLTWLYS, VFTYILCSFSFPLSFWTIFS, VGVVFTLATGFTYLSGFFL, VLSPSTLLIISVMLFIASTFVVI, TSSLLVLTVYPPILFAIY, and IISSLKIYTYSYLGFLIAFAIGC.

Its subcellular location is the cell membrane. This is an uncharacterized protein from Archaeoglobus fulgidus (strain ATCC 49558 / DSM 4304 / JCM 9628 / NBRC 100126 / VC-16).